The chain runs to 867 residues: Pentatricopeptide repeat-containing protein At2g39230, mitochondrial (867 aa).

The transit peptide at 1-49 directs the protein to the mitochondrion; it reads MTTFMVSKRFRPPIFLHRFINPKPISSQTRFLHPPDNQSRDISDSTTET. The disordered stretch occupies residues 27–74; sequence SQTRFLHPPDNQSRDISDSTTETISTLEFPHKTSVPNHSPLTSTSETE. The span at 60–72 shows a compositional bias: polar residues; it reads SVPNHSPLTSTSE. PPR repeat units follow at residues 168-202, 203-237, 238-272, 273-307, 309-343, 344-378, 379-413, 414-444, 448-482, 483-517, 518-552, 553-588, 589-623, 624-658, 659-693, 694-728, 729-763, 764-798, and 799-833; these read TPRAFNYLLNAYIRNKRMDYAVDCFGLMVDRKVVP, FVPYVNNVLSSLVRSNLIDEAKEIYNKMVLIGVAG, DNVTTQLLMRASLRERKPEEAVKIFRRVMSRGAEP, DGLLFSLAVQAACKTPDLVMALDLLREMRGKLGVP, SQETYTSVIVAFVKEGNMEEAVRVMDEMVGFGIPM, SVIAATSLVNGYCKGNELGKALDLFNRMEEEGLAP, DKVMFSVMVEWFCKNMEMEKAIEFYMRMKSVRIAP, SSVLVHTMIQGCLKAESPEAALEIFNDSFES, HGFMCNKIFLLFCKQGKVDAATSFLKMMEQKGIEP, NVVFYNNMMLAHCRMKNMDLARSIFSEMLEKGLEP, NNFTYSILIDGFFKNKDEQNAWDVINQMNASNFEA, NEVIYNTIINGLCKVGQTSKAKEMLQNLIKEKRYSM, SCTSYNSIIDGFVKVGDTDSAVETYREMSENGKSP, NVVTFTSLINGFCKSNRMDLALEMTHEMKSMELKL, DLPAYGALIDGFCKKNDMKTAYTLFSELPELGLMP, NVSVYNSLISGFRNLGKMDAAIDLYKKMVNDGISC, DLFTYTTMIDGLLKDGNINLASDLYSELLDLGIVP, DEILHMVLVNGLSKKGQFLKASKMLEEMKKKDVTP, and NVLLYSTVIAGHHREGNLNEAFRLHDEMLEKGIVH.

It belongs to the PPR family. P subfamily. Expressed in lateral organ junctions and shoot apical meristem (SAM).

The protein localises to the mitochondrion. Involved in lateral organ development and boundary demarcation. The polypeptide is Pentatricopeptide repeat-containing protein At2g39230, mitochondrial (LOJ) (Arabidopsis thaliana (Mouse-ear cress)).